The chain runs to 359 residues: MKSYKITLLPGDGIGPEITNVTHKILDLVSRKFGFEIKFKEMPFGGSAIDSDGIPFPDRTLQECKNSDAVLLAAIGDPKYDELPREKRPETGLLNLRSSLDLFANIRPVKIIPSLTKASSLKEDFVKEVDLVVVRELTSGIYFGEPKGRIKTDKGERAFNTMTYTSEEVNRIAEIAFKLAKQRNQKVCSVDKANVLDVSQLWREETILVSNKYKDIELTHQYVDNAAMQLVRNPSQFDVILTGNLFGDILSDIAAMLTGSIGMLPSASLTTDGPGVFEPVHGSAPDIAGKDIANPIAMLLSAAMMLKIALNETEAATFLENAINEILNDGYRTSDLMSIQTTKQVGCSQMGELLAEKLK.

Positions 97, 107, 135, and 224 each coordinate substrate. Positions 224, 248, and 252 each coordinate Mg(2+). 282-294 (GSAPDIAGKDIAN) serves as a coordination point for NAD(+).

It belongs to the isocitrate and isopropylmalate dehydrogenases family. LeuB type 1 subfamily. Homodimer. Requires Mg(2+) as cofactor. It depends on Mn(2+) as a cofactor.

The protein localises to the cytoplasm. It carries out the reaction (2R,3S)-3-isopropylmalate + NAD(+) = 4-methyl-2-oxopentanoate + CO2 + NADH. Its pathway is amino-acid biosynthesis; L-leucine biosynthesis; L-leucine from 3-methyl-2-oxobutanoate: step 3/4. In terms of biological role, catalyzes the oxidation of 3-carboxy-2-hydroxy-4-methylpentanoate (3-isopropylmalate) to 3-carboxy-4-methyl-2-oxopentanoate. The product decarboxylates to 4-methyl-2 oxopentanoate. The protein is 3-isopropylmalate dehydrogenase of Prochlorococcus marinus (strain NATL2A).